The chain runs to 419 residues: D-amino acid dehydrogenase (419 aa).

Position 3 to 17 (3 to 17 (VLILGSGVVGVTSAY)) interacts with FAD.

It belongs to the DadA oxidoreductase family. Requires FAD as cofactor.

It catalyses the reaction a D-alpha-amino acid + A + H2O = a 2-oxocarboxylate + AH2 + NH4(+). Its pathway is amino-acid degradation; D-alanine degradation; NH(3) and pyruvate from D-alanine: step 1/1. In terms of biological role, oxidative deamination of D-amino acids. This chain is D-amino acid dehydrogenase, found in Chromohalobacter salexigens (strain ATCC BAA-138 / DSM 3043 / CIP 106854 / NCIMB 13768 / 1H11).